A 242-amino-acid polypeptide reads, in one-letter code: Intraflagellar transport-associated protein (242 aa).

A Phosphoserine modification is found at S57.

As to quaternary structure, interacts with IFT122; the interaction associates IFTAP with IFT-A complex.

Seems to play a role in ciliary BBSome localization, maybe through interaction with IFT-A complex. This Bos taurus (Bovine) protein is Intraflagellar transport-associated protein (IFTAP).